We begin with the raw amino-acid sequence, 551 residues long: Formate--tetrahydrofolate ligase (551 aa).

61 to 68 (TPAGEGKS) is a binding site for ATP.

It belongs to the formate--tetrahydrofolate ligase family.

It carries out the reaction (6S)-5,6,7,8-tetrahydrofolate + formate + ATP = (6R)-10-formyltetrahydrofolate + ADP + phosphate. The protein operates within one-carbon metabolism; tetrahydrofolate interconversion. This is Formate--tetrahydrofolate ligase from Lactiplantibacillus plantarum (strain ATCC BAA-793 / NCIMB 8826 / WCFS1) (Lactobacillus plantarum).